The chain runs to 180 residues: Nucleoside-triphosphatase THEP1 (180 aa).

Residues 9–16 and 99–106 contribute to the ATP site; these read GRPGIGKT and VVIVDEVG.

It belongs to the THEP1 NTPase family.

The catalysed reaction is a ribonucleoside 5'-triphosphate + H2O = a ribonucleoside 5'-diphosphate + phosphate + H(+). Its function is as follows. Has nucleotide phosphatase activity towards ATP, GTP, CTP, TTP and UTP. May hydrolyze nucleoside diphosphates with lower efficiency. The sequence is that of Nucleoside-triphosphatase THEP1 from Methanopyrus kandleri (strain AV19 / DSM 6324 / JCM 9639 / NBRC 100938).